The primary structure comprises 280 residues: Tobamovirus multiplication protein 2A (280 aa).

Residues 1–13 (MACRGCLECLLKL) lie on the Cytoplasmic side of the membrane. Residues 14–34 (LNFLLAVAGLGMIGYGIYLFV) traverse the membrane as a helical segment. Topologically, residues 35–78 (EYKRVTDNSVTFDLTNGDQSYVSFGRPILMAVSLSSNIFDNLPK) are extracellular. Residues 79–99 (AWFIYLFIGIGVALFVISCCG) traverse the membrane as a helical segment. Residues 100–113 (CVGTCSRSVCCLSC) lie on the Cytoplasmic side of the membrane. The helical transmembrane segment at 114 to 134 (YSLLLILLILVELGFAAFIFF) threads the bilayer. Residues 135–162 (DNSWRDELPSDRTGNFDTIYNFLRENWK) are Extracellular-facing. The chain crosses the membrane as a helical span at residues 163–183 (IVRWVALGAVVFEALLFLLAL). Over 184–280 (MVRAANTPAE…NEEKGRCTIM (97 aa)) the chain is Cytoplasmic. Residues Ser-196 and Ser-233 each carry the phosphoserine modification. The tract at residues 258-280 (SESHRFQQMPAQPNEEKGRCTIM) is disordered. Positions 271–280 (NEEKGRCTIM) are enriched in basic and acidic residues.

Belongs to the tetraspanin (TM4SF) family. Homodimer. Constituent of tobamovirus replication complex. Interacts with TOM1. Expressed in rosette leaves.

Its subcellular location is the vacuole membrane. Its function is as follows. Necessary for the efficient intracellular multiplication of tobamoviruses, being a component of the replication complex. The sequence is that of Tobamovirus multiplication protein 2A (TOM2A) from Arabidopsis thaliana (Mouse-ear cress).